A 196-amino-acid polypeptide reads, in one-letter code: Proteasome subunit beta 1 (196 aa).

Residues Met1–Gly6 constitute a propeptide, removed in mature form; by autocatalysis. Thr7 functions as the Nucleophile in the catalytic mechanism.

This sequence belongs to the peptidase T1B family. The 20S proteasome core is composed of 14 alpha and 14 beta subunits that assemble into four stacked heptameric rings, resulting in a barrel-shaped structure. The two inner rings, each composed of seven catalytic beta subunits, are sandwiched by two outer rings, each composed of seven alpha subunits. The catalytic chamber with the active sites is on the inside of the barrel. Has a gated structure, the ends of the cylinder being occluded by the N-termini of the alpha-subunits. Is capped at one or both ends by the proteasome regulatory ATPase, PAN.

The protein localises to the cytoplasm. It catalyses the reaction Cleavage of peptide bonds with very broad specificity.. Its activity is regulated as follows. The formation of the proteasomal ATPase PAN-20S proteasome complex, via the docking of the C-termini of PAN into the intersubunit pockets in the alpha-rings, triggers opening of the gate for substrate entry. Interconversion between the open-gate and close-gate conformations leads to a dynamic regulation of the 20S proteasome proteolysis activity. Functionally, component of the proteasome core, a large protease complex with broad specificity involved in protein degradation. The protein is Proteasome subunit beta 1 of Pyrococcus furiosus (strain ATCC 43587 / DSM 3638 / JCM 8422 / Vc1).